A 306-amino-acid chain; its full sequence is Beta-lactamase 1 (306 aa).

Residues 1–27 (MILKNKRMLKIGICVGILGLSITSLEA) form the signal peptide. Ser91 functions as the Acyl-ester intermediate in the catalytic mechanism. Glu187 acts as the Proton acceptor in catalysis. Substrate is bound at residue 253 to 255 (KSG).

Belongs to the class-A beta-lactamase family.

The catalysed reaction is a beta-lactam + H2O = a substituted beta-amino acid. Its function is as follows. This protein is a beta-lactamase with a substrate specificity for penicillins. This is Beta-lactamase 1 (blaY) from Bacillus cereus.